Consider the following 383-residue polypeptide: Acetylornithine deacetylase (383 aa).

His-80 contributes to the Zn(2+) binding site. Asp-82 is an active-site residue. A Zn(2+)-binding site is contributed by Asp-112. Glu-144 is an active-site residue. Zn(2+) contacts are provided by Glu-145, Glu-169, and His-355.

It belongs to the peptidase M20A family. ArgE subfamily. In terms of assembly, homodimer. It depends on Zn(2+) as a cofactor. Requires Co(2+) as cofactor. Glutathione serves as cofactor.

It localises to the cytoplasm. The enzyme catalyses N(2)-acetyl-L-ornithine + H2O = L-ornithine + acetate. The protein operates within amino-acid biosynthesis; L-arginine biosynthesis; L-ornithine from N(2)-acetyl-L-ornithine (linear): step 1/1. Its function is as follows. Catalyzes the hydrolysis of the amide bond of N(2)-acetylated L-amino acids. Cleaves the acetyl group from N-acetyl-L-ornithine to form L-ornithine, an intermediate in L-arginine biosynthesis pathway, and a branchpoint in the synthesis of polyamines. This chain is Acetylornithine deacetylase, found in Escherichia coli (strain K12 / MC4100 / BW2952).